Consider the following 244-residue polypeptide: tRNA uridine(34) hydroxylase (244 aa).

The Rhodanese domain occupies 129-219 (QGRELVMLDT…GILKYFEETD (91 aa)). Cysteine 183 acts as the Cysteine persulfide intermediate in catalysis.

It belongs to the TrhO family.

The enzyme catalyses uridine(34) in tRNA + AH2 + O2 = 5-hydroxyuridine(34) in tRNA + A + H2O. In terms of biological role, catalyzes oxygen-dependent 5-hydroxyuridine (ho5U) modification at position 34 in tRNAs. The sequence is that of tRNA uridine(34) hydroxylase from Bordetella bronchiseptica (strain ATCC BAA-588 / NCTC 13252 / RB50) (Alcaligenes bronchisepticus).